A 544-amino-acid chain; its full sequence is Spore germination protein KA (544 aa).

The disordered stretch occupies residues Met-1–Ile-36. The span at Asn-9–Pro-33 shows a compositional bias: basic and acidic residues. The next 5 helical transmembrane spans lie at Phe-279–Phe-299, Val-321–His-341, Ala-392–Ser-412, Val-416–Ile-436, and Phe-443–Met-463. Over residues Lys-504–Pro-523 the composition is skewed to basic and acidic residues. A disordered region spans residues Lys-504–Thr-544.

It belongs to the GerABKA family.

It localises to the cell membrane. Involved in the germination response to the combination of glucose, fructose, L-asparagine, and KCl. This chain is Spore germination protein KA (gerKA), found in Bacillus subtilis (strain 168).